The chain runs to 195 residues: Myelin-associated neurite-outgrowth inhibitor (195 aa).

Residues 1–18 are Cytoplasmic-facing; the sequence is MNPVYSPGSSGVPYANAK. Residues 19–43 form a helical membrane-spanning segment; it reads GIGYPAGFPMGYAAAAPAYSPNMYA. At 44-143 the chain is on the extracellular side; it reads GPNPAFQPGY…APIPQPRGNG (100 aa). A helical membrane pass occupies residues 144–162; sequence VAMGMVAGTTMAMSAGTLL. The Cytoplasmic segment spans residues 163-195; that stretch reads TSHYPTPVAPHQVTMPTYRPPGTPTYSYVPPQW.

Belongs to the FAM168 family.

Its subcellular location is the cytoplasm. The protein resides in the perinuclear region. It is found in the cell membrane. The protein localises to the cell projection. It localises to the axon. Inhibitor of neuronal axonal outgrowth. This Xenopus tropicalis (Western clawed frog) protein is Myelin-associated neurite-outgrowth inhibitor (fam168b).